An 85-amino-acid polypeptide reads, in one-letter code: Protein RnfH (85 aa).

Belongs to the UPF0125 (RnfH) family.

The chain is Protein RnfH from Cereibacter sphaeroides (strain ATCC 17029 / ATH 2.4.9) (Rhodobacter sphaeroides).